The chain runs to 128 residues: Aspartate 1-decarboxylase (128 aa).

Catalysis depends on serine 25, which acts as the Schiff-base intermediate with substrate; via pyruvic acid. Serine 25 carries the pyruvic acid (Ser) modification. A substrate-binding site is contributed by threonine 57. Tyrosine 58 (proton donor) is an active-site residue. 73-75 is a binding site for substrate; it reads GAA.

It belongs to the PanD family. As to quaternary structure, heterooctamer of four alpha and four beta subunits. Pyruvate is required as a cofactor. In terms of processing, is synthesized initially as an inactive proenzyme, which is activated by self-cleavage at a specific serine bond to produce a beta-subunit with a hydroxyl group at its C-terminus and an alpha-subunit with a pyruvoyl group at its N-terminus.

Its subcellular location is the cytoplasm. The catalysed reaction is L-aspartate + H(+) = beta-alanine + CO2. The protein operates within cofactor biosynthesis; (R)-pantothenate biosynthesis; beta-alanine from L-aspartate: step 1/1. Functionally, catalyzes the pyruvoyl-dependent decarboxylation of aspartate to produce beta-alanine. The chain is Aspartate 1-decarboxylase from Chlorobium phaeovibrioides (strain DSM 265 / 1930) (Prosthecochloris vibrioformis (strain DSM 265)).